The sequence spans 435 residues: Serine--tRNA ligase (435 aa).

242–244 is a binding site for L-serine; the sequence is TAE. An ATP-binding site is contributed by 273–275; that stretch reads RSE. Glu-296 lines the L-serine pocket. Residue 360–363 participates in ATP binding; the sequence is EISS. Ser-396 is a binding site for L-serine.

The protein belongs to the class-II aminoacyl-tRNA synthetase family. Type-1 seryl-tRNA synthetase subfamily. In terms of assembly, homodimer. The tRNA molecule binds across the dimer.

The protein localises to the cytoplasm. It carries out the reaction tRNA(Ser) + L-serine + ATP = L-seryl-tRNA(Ser) + AMP + diphosphate + H(+). The catalysed reaction is tRNA(Sec) + L-serine + ATP = L-seryl-tRNA(Sec) + AMP + diphosphate + H(+). The protein operates within aminoacyl-tRNA biosynthesis; selenocysteinyl-tRNA(Sec) biosynthesis; L-seryl-tRNA(Sec) from L-serine and tRNA(Sec): step 1/1. In terms of biological role, catalyzes the attachment of serine to tRNA(Ser). Is also able to aminoacylate tRNA(Sec) with serine, to form the misacylated tRNA L-seryl-tRNA(Sec), which will be further converted into selenocysteinyl-tRNA(Sec). In Aliivibrio salmonicida (strain LFI1238) (Vibrio salmonicida (strain LFI1238)), this protein is Serine--tRNA ligase.